The sequence spans 313 residues: MPIRIPDQLPAADVLRTENIFVMSETRAAKQEIRPLRVLILNLMPKKIETETQFLRLLSNSPLQVNVELLRIDDRPSKNTPTEHLDNFYRQFEMVKNRNFDGLIITGAPLGLVQFEDVIYWDHLKTIMEWAKSHVTSTLYVCWAAQAGLKLLYDLPKKTRKEKLSGVYHHRIHKPYHPVLRGFDDSFLAPHSRYADFSPEYLAEHTDLDILATSDDAGVYLATTKDKRNVFVTGHPEYDPHTLHNEYIRDLGEGMEPAIPVNYYPNDNPDNPPIASWRSHGHLLFSNWLNYCVYQQTPYDLDHFSEEAFTKDE.

The Acyl-thioester intermediate role is filled by cysteine 142. Residues lysine 163 and serine 192 each coordinate substrate. Histidine 235 acts as the Proton acceptor in catalysis. Glutamate 237 is an active-site residue. Arginine 249 contributes to the substrate binding site.

It belongs to the MetA family.

It localises to the cytoplasm. It catalyses the reaction L-homoserine + succinyl-CoA = O-succinyl-L-homoserine + CoA. It functions in the pathway amino-acid biosynthesis; L-methionine biosynthesis via de novo pathway; O-succinyl-L-homoserine from L-homoserine: step 1/1. Functionally, transfers a succinyl group from succinyl-CoA to L-homoserine, forming succinyl-L-homoserine. The protein is Homoserine O-succinyltransferase of Vibrio vulnificus (strain YJ016).